We begin with the raw amino-acid sequence, 114 residues long: UPF0102 protein CD630_12710 (114 aa).

It belongs to the UPF0102 family.

This Clostridioides difficile (strain 630) (Peptoclostridium difficile) protein is UPF0102 protein CD630_12710.